The primary structure comprises 408 residues: MIPGNRMLMVVLLCQVLLGGASHASLIPETGKKKVAEIQGHAGGRRSGQSHELLRDFEATLLQMFGLRRRPQPSKSAVIPDYMRDLYRLQSGEEEEEEQSQGTGLEYPERPASRANTVRSFHHEEHLENIPGTSESSAFRFLFNLSSIPENEVISSAELRLFREQVDQGPDWEQGFHRINIYEVMKPPAEMVPGHLITRLLDTRLVHHNVTRWETFDVSPAVLRWTREKQPNYGLAIEVTHLHQTRTHQGQHVRISRSLPQGSGDWAQLRPLLVTFGHDGRGHTLTRRRAKRSPKHHPQRSRKKNKNCRRHSLYVDFSDVGWNDWIVAPPGYQAFYCHGDCPFPLADHLNSTNHAIVQTLVNSVNSSIPKACCVPTELSAISMLYLDEYDKVVLKNYQEMVVEGCGCR.

Positions 1 to 19 are cleaved as a signal peptide; the sequence is MIPGNRMLMVVLLCQVLLG. A propeptide spanning residues 20 to 292 is cleaved from the precursor; that stretch reads GASHASLIPE…HTLTRRRAKR (273 aa). Ser91 is subject to Phosphoserine. Residues 91–111 form a disordered region; sequence SGEEEEEEQSQGTGLEYPERP. N-linked (GlcNAc...) asparagine glycans are attached at residues Asn144 and Asn209. Positions 281 to 307 are disordered; that stretch reads RGHTLTRRRAKRSPKHHPQRSRKKNKN. The segment covering 284–307 has biased composition (basic residues); sequence TLTRRRAKRSPKHHPQRSRKKNKN. Disulfide bonds link Cys308–Cys373, Cys337–Cys405, and Cys341–Cys407. N-linked (GlcNAc...) asparagine glycosylation is found at Asn350 and Asn365.

Belongs to the TGF-beta family. As to quaternary structure, homodimer; disulfide-linked. Interacts with SOSTDC1, GREM2, RGMA, RGMB and RGMC. Part of a complex consisting of TWSG1 and CHRD. Interacts with the serine proteases, HTRA1 and HTRA3; the interaction with either inhibits BMP4-mediated signaling. The HTRA protease activity is required for this inhibition. Interacts with FBN1 (via N-terminal domain) and FBN2. Interacts with type I receptor BMPR1A. Interacts with type II receptor BMPR2. Interacts with FSTL1; this interaction inhibits the activation of the BMP4/Smad1/5/8 signaling pathway. Interacts with SCUBE3. Interacts with TGFBR3. As to expression, in the cochlea, detected in nonprosensory regions and outer sulcus (at protein level). Prior to gastrulation, expressed in the extraembryonic ectoderm. Later, expressed in the extraembryonic mesoderm.

Its subcellular location is the secreted. It is found in the extracellular space. The protein localises to the extracellular matrix. Its function is as follows. Growth factor of the TGF-beta superfamily that plays essential roles in many developmental processes, including neurogenesis, vascular development, angiogenesis and osteogenesis. Acts in concert with PTHLH/PTHRP to stimulate ductal outgrowth during embryonic mammary development and to inhibit hair follicle induction. Initiates the canonical BMP signaling cascade by associating with type I receptor BMPR1A and type II receptor BMPR2. Once all three components are bound together in a complex at the cell surface, BMPR2 phosphorylates and activates BMPR1A. In turn, BMPR1A propagates signal by phosphorylating SMAD1/5/8 that travel to the nucleus and act as activators and repressors of transcription of target genes. Positively regulates the expression of odontogenic development regulator MSX1 via inducing the IPO7-mediated import of SMAD1 to the nucleus. Required for MSX1-mediated mesenchymal molar tooth bud development beyond the bud stage, via promoting Wnt signaling. Acts as a positive regulator of odontoblast differentiation during mesenchymal tooth germ formation, expression is repressed during the bell stage by MSX1-mediated inhibition of CTNNB1 signaling. Able to induce its own expression in dental mesenchymal cells and also in the neighboring dental epithelial cells via an MSX1-mediated pathway. Can also signal through non-canonical BMP pathways such as ERK/MAP kinase, PI3K/Akt or SRC cascades. For example, induces SRC phosphorylation which, in turn, activates VEGFR2, leading to an angiogenic response. The polypeptide is Bone morphogenetic protein 4 (Mus musculus (Mouse)).